The primary structure comprises 411 residues: Acetyl-coenzyme A carboxylase carboxyl transferase subunit beta, chloroplastic (411 aa).

One can recognise a CoA carboxyltransferase N-terminal domain in the interval 32-302 (LWTRCDHCGV…KEQGRIPYGE (271 aa)). 4 residues coordinate Zn(2+): Cys36, Cys39, Cys55, and Cys58. The C4-type zinc-finger motif lies at 36-58 (CDHCGVILYIKHLKENQRVCFGC).

Belongs to the AccD/PCCB family. As to quaternary structure, acetyl-CoA carboxylase is a heterohexamer composed of biotin carboxyl carrier protein, biotin carboxylase and 2 subunits each of ACCase subunit alpha and ACCase plastid-coded subunit beta (accD). It depends on Zn(2+) as a cofactor.

Its subcellular location is the plastid. It localises to the chloroplast stroma. The enzyme catalyses N(6)-carboxybiotinyl-L-lysyl-[protein] + acetyl-CoA = N(6)-biotinyl-L-lysyl-[protein] + malonyl-CoA. It functions in the pathway lipid metabolism; malonyl-CoA biosynthesis; malonyl-CoA from acetyl-CoA: step 1/1. Its function is as follows. Component of the acetyl coenzyme A carboxylase (ACC) complex. Biotin carboxylase (BC) catalyzes the carboxylation of biotin on its carrier protein (BCCP) and then the CO(2) group is transferred by the transcarboxylase to acetyl-CoA to form malonyl-CoA. The sequence is that of Acetyl-coenzyme A carboxylase carboxyl transferase subunit beta, chloroplastic from Chlorella vulgaris (Green alga).